The sequence spans 300 residues: MSAASSTESVTPALKAEILAEALPYIKRFFDKTIVIKYGGNAMTDPHLKDCFARDVVLLKLVGLNPVVVHGGGPQIETLLAKVGKKGEFVQGMRVTDAETMEVVEMVLGGQVNKEIVNLINQAGGKAVGLTGKDASFIRAKKLLMQKLDAPAGDVIDVGQVGEITTIDPSLISFLDQGDFIPVIAPIGVGDNGETYNINADVVAGKLAEILKAEKLVLLTNTPGVLDKAGNLLTGLTPRQIDDLVADGTLSGGMLPKIGSALDAARNGVKSVHIIDGRVEHCLLLEILTDHGVGTMIKSK.

Residues 72–73, arginine 94, and asparagine 197 contribute to the substrate site; that span reads GG.

Belongs to the acetylglutamate kinase family. ArgB subfamily.

It localises to the cytoplasm. It carries out the reaction N-acetyl-L-glutamate + ATP = N-acetyl-L-glutamyl 5-phosphate + ADP. Its pathway is amino-acid biosynthesis; L-arginine biosynthesis; N(2)-acetyl-L-ornithine from L-glutamate: step 2/4. Functionally, catalyzes the ATP-dependent phosphorylation of N-acetyl-L-glutamate. The chain is Acetylglutamate kinase from Azoarcus sp. (strain BH72).